The following is a 120-amino-acid chain: NAD(P)H-quinone oxidoreductase subunit 3, chloroplastic (120 aa).

3 consecutive transmembrane segments (helical) span residues 9–29 (IFWA…LISG), 64–84 (MFAL…PWAM), and 88–108 (VLGV…IVGS).

The protein belongs to the complex I subunit 3 family. NDH is composed of at least 16 different subunits, 5 of which are encoded in the nucleus.

The protein resides in the plastid. The protein localises to the chloroplast thylakoid membrane. The catalysed reaction is a plastoquinone + NADH + (n+1) H(+)(in) = a plastoquinol + NAD(+) + n H(+)(out). It carries out the reaction a plastoquinone + NADPH + (n+1) H(+)(in) = a plastoquinol + NADP(+) + n H(+)(out). NDH shuttles electrons from NAD(P)H:plastoquinone, via FMN and iron-sulfur (Fe-S) centers, to quinones in the photosynthetic chain and possibly in a chloroplast respiratory chain. The immediate electron acceptor for the enzyme in this species is believed to be plastoquinone. Couples the redox reaction to proton translocation, and thus conserves the redox energy in a proton gradient. The protein is NAD(P)H-quinone oxidoreductase subunit 3, chloroplastic of Carica papaya (Papaya).